A 34-amino-acid polypeptide reads, in one-letter code: Photosystem II reaction center protein Psb30 (34 aa).

Residues 6–26 form a helical membrane-spanning segment; the sequence is VIGQLIATGAIMLAGPAVIVL.

The protein belongs to the Psb30/Ycf12 family. PSII is composed of 1 copy each of membrane proteins PsbA, PsbB, PsbC, PsbD, PsbE, PsbF, PsbH, PsbI, PsbJ, PsbK, PsbL, PsbM, PsbT, PsbX, PsbY, PsbZ, Psb30/Ycf12, peripheral proteins of the oxygen-evolving complex and a large number of cofactors. It forms dimeric complexes.

It localises to the plastid. It is found in the chloroplast thylakoid membrane. In terms of biological role, a core subunit of photosystem II (PSII), probably helps stabilize the reaction center. This Trieres chinensis (Marine centric diatom) protein is Photosystem II reaction center protein Psb30.